The sequence spans 146 residues: Nuclear export protein (146 aa).

Interacts with host HSC70.

It is found in the host cytoplasm. In terms of biological role, may mediate the nuclear export of encapsidated genomic RNAs (ribonucleoproteins, RNPs). Interaction of viral NEP with M1-Hsc70 is thought to promote nuclear export of the viral encapsidated genomes. This Infectious salmon anemia virus (isolate Atlantic salmon/Norway/810/9/99) (ISAV) protein is Nuclear export protein.